The following is a 470-amino-acid chain: 6-phospho-beta-galactosidase (470 aa).

D-galactose 6-phosphate is bound by residues Q19, H116, N159, E160, and N297. Residue E160 is the Proton donor of the active site. Residue E375 is the Nucleophile of the active site. S430, W431, K437, and Y439 together coordinate D-galactose 6-phosphate.

Belongs to the glycosyl hydrolase 1 family.

It carries out the reaction a 6-phospho-beta-D-galactoside + H2O = D-galactose 6-phosphate + an alcohol. Its pathway is carbohydrate metabolism; lactose degradation; D-galactose 6-phosphate and beta-D-glucose from lactose 6-phosphate: step 1/1. The chain is 6-phospho-beta-galactosidase from Staphylococcus aureus (strain MRSA252).